Reading from the N-terminus, the 537-residue chain is Glutamyl-tRNA reductase, chloroplastic (537 aa).

Residues Met-1–Arg-48 constitute a chloroplast transit peptide. Residues Thr-134–Arg-137, Ser-194, Glu-199–Gln-201, and Gln-205 contribute to the substrate site. Cys-135 (nucleophile) is an active-site residue. Gly-276–Gly-281 is an NADP(+) binding site.

It belongs to the glutamyl-tRNA reductase family.

It is found in the plastid. Its subcellular location is the chloroplast. It catalyses the reaction (S)-4-amino-5-oxopentanoate + tRNA(Glu) + NADP(+) = L-glutamyl-tRNA(Glu) + NADPH + H(+). Its pathway is porphyrin-containing compound metabolism; protoporphyrin-IX biosynthesis; 5-aminolevulinate from L-glutamyl-tRNA(Glu): step 1/2. In terms of biological role, catalyzes the NADPH-dependent reduction of glutamyl-tRNA(Glu) to glutamate 1-semialdehyde (GSA). In Oryza sativa subsp. japonica (Rice), this protein is Glutamyl-tRNA reductase, chloroplastic.